We begin with the raw amino-acid sequence, 253 residues long: LexA repressor (253 aa).

A DNA-binding region (H-T-H motif) is located at residues 26-46 (FDEMKDALNLRSKSGIHRLIS). The tract at residues 73 to 97 (MPAATGKPPLAESGPPPVTAPATDE) is disordered. Residues serine 174 and lysine 212 each act as for autocatalytic cleavage activity in the active site.

It belongs to the peptidase S24 family. In terms of assembly, homodimer.

It catalyses the reaction Hydrolysis of Ala-|-Gly bond in repressor LexA.. In terms of biological role, represses a number of genes involved in the response to DNA damage (SOS response), including recA and lexA. In the presence of single-stranded DNA, RecA interacts with LexA causing an autocatalytic cleavage which disrupts the DNA-binding part of LexA, leading to derepression of the SOS regulon and eventually DNA repair. This Gluconacetobacter diazotrophicus (strain ATCC 49037 / DSM 5601 / CCUG 37298 / CIP 103539 / LMG 7603 / PAl5) protein is LexA repressor.